We begin with the raw amino-acid sequence, 278 residues long: Large ribosomal subunit protein uL2 (278 aa).

Disordered stretches follow at residues 27–57 (STPEKSLVRPLHSKGGRNNAGRVTVRHQGGG) and 224–278 (VAMN…NKKR). A compositionally biased stretch (basic residues) spans 258–278 (RSPKKASSKYIVRRRKTNKKR).

This sequence belongs to the universal ribosomal protein uL2 family. As to quaternary structure, part of the 50S ribosomal subunit. Forms a bridge to the 30S subunit in the 70S ribosome.

Its function is as follows. One of the primary rRNA binding proteins. Required for association of the 30S and 50S subunits to form the 70S ribosome, for tRNA binding and peptide bond formation. It has been suggested to have peptidyltransferase activity; this is somewhat controversial. Makes several contacts with the 16S rRNA in the 70S ribosome. This chain is Large ribosomal subunit protein uL2, found in Streptomyces avermitilis (strain ATCC 31267 / DSM 46492 / JCM 5070 / NBRC 14893 / NCIMB 12804 / NRRL 8165 / MA-4680).